We begin with the raw amino-acid sequence, 166 residues long: Probable histone deacetylase complex subunit SAP18 (166 aa).

The tract at residues 143–166 (GRRFNNREQGDRFDHRQRQRSPIR) is disordered. Over residues 147–158 (NNREQGDRFDHR) the composition is skewed to basic and acidic residues.

Belongs to the SAP18 family. As to quaternary structure, interacts with SIN3 and histone deacetylase.

Its function is as follows. Acts in transcription repression. Involved in the tethering of the SIN3 complex to core histone proteins. This is Probable histone deacetylase complex subunit SAP18 from Caenorhabditis elegans.